The primary structure comprises 238 residues: Orotidine 5'-phosphate decarboxylase (238 aa).

Residues Asp18, Lys40, 67 to 76 (DMKLLDIDNT), Thr122, Arg183, Gln192, and Arg213 each bind substrate. Residue Lys69 is the Proton donor of the active site.

This sequence belongs to the OMP decarboxylase family. Type 1 subfamily. Homodimer.

It catalyses the reaction orotidine 5'-phosphate + H(+) = UMP + CO2. The protein operates within pyrimidine metabolism; UMP biosynthesis via de novo pathway; UMP from orotate: step 2/2. Its function is as follows. Catalyzes the decarboxylation of orotidine 5'-monophosphate (OMP) to uridine 5'-monophosphate (UMP). In Brucella melitensis biotype 2 (strain ATCC 23457), this protein is Orotidine 5'-phosphate decarboxylase.